A 979-amino-acid chain; its full sequence is Calsyntenin-1 (979 aa).

The N-terminal stretch at 1-28 (MLRRPAPALAPAVRLLLAGLLCGGGVWA) is a signal peptide. Over 29-859 (ARVNKHKPWL…PHPFAVVPST (831 aa)) the chain is Extracellular. Cadherin domains lie at 38 to 164 (LEPT…APVF) and 165 to 265 (KEKS…SPGW). N-linked (GlcNAc...) asparagine glycans are attached at residues Asn-346, Asn-366, and Asn-515. The chain crosses the membrane as a helical span at residues 860–880 (ATVVIVVCVSFLVFMIILGVF). Over 881 to 979 (RIRAAHQRTM…LEWDDSTLSY (99 aa)) the chain is Cytoplasmic. The disordered stretch occupies residues 915–979 (METYEDQHSS…LEWDDSTLSY (65 aa)). The span at 925 to 959 (EEEEEEEEEEESEDGEEEEDITSAESESSEEEEGG) shows a compositional bias: acidic residues.

The protein belongs to the calsyntenin family. As to quaternary structure, directly interacts with APBA2. Forms a tripartite complex with APBA2 and APP. The CTF1 chain interacts with PSEN1. Interacts with KLC1 and APBB1. Interacts with APBB1; this interaction stabilizes AlcICD metabolism. In terms of assembly, interacts with PSEN1. Proteolytically processed under normal cellular conditions. A primary zeta-cleavage generates a large extracellular (soluble) N-terminal domain (sAlc) and a short C-terminal transmembrane fragment (CTF1). A secondary cleavage catalyzed by presenilin gamma-secretase within the transmembrane domain releases the beta-Alc-alpha chain in the extracellular milieu and produces an intracellular fragment (AlcICD). Beta-Alc-alpha secretion is largely dependent upon PSEN1 and PSEN2. This processing is strongly suppressed in the tripartite complex formed with APBA2 and APP, which seems to prevent the association with PSEN1. In terms of tissue distribution, highly expressed in the brain (at protein level), with over 90% of the neurons expressing detectable amounts. In the brain, relatively high levels in the cerebral cortex, striatum, hippocampus and thalamus. Moderate levels in the cerebellum. Low levels in the olfactory bulb, midbrain and pons (at protein level). Not detected in Purkinje cells. Expressed at low levels in the lung (at protein level). At the mRNA level, weakly detected in the kidney, lung, skeletal muscle, heart and testis. Not expressed in the sciatic nerve fiber.

It is found in the postsynaptic cell membrane. It localises to the endoplasmic reticulum membrane. Its subcellular location is the golgi apparatus membrane. The protein localises to the cell projection. The protein resides in the neuron projection. It is found in the vesicle. It localises to the nucleus. Its function is as follows. Postsynaptic adhesion molecule that binds to presynaptic neurexins to mediate both excitatory and inhibitory synapse formation. Promotes synapse development by acting as a cell adhesion molecule at the postsynaptic membrane, which associates with neurexin-alpha at the presynaptic membrane. Also functions as a cargo in axonal anterograde transport by acting as a molecular adapter that promotes KLC1 association with vesicles. Complex formation with APBA2 and APP, stabilizes APP metabolism and enhances APBA2-mediated suppression of beta-APP40 secretion, due to the retardation of intracellular APP maturation. In terms of biological role, as intracellular fragment AlcICD, suppresses APBB1-dependent transactivation stimulated by APP C-terminal intracellular fragment (AICD), most probably by competing with AICD for APBB1-binding. Functionally, in complex with APBA2 and C99, a C-terminal APP fragment, abolishes C99 interaction with PSEN1 and thus APP C99 cleavage by gamma-secretase, most probably through stabilization of the direct interaction between APBA2 and APP. The sequence is that of Calsyntenin-1 from Mus musculus (Mouse).